The chain runs to 396 residues: S-adenosylmethionine synthase (396 aa).

His-16 provides a ligand contact to ATP. Residue Asp-18 participates in Mg(2+) binding. Glu-44 lines the K(+) pocket. 2 residues coordinate L-methionine: Glu-57 and Gln-100. The tract at residues 100–110 (QSPDINQGVDR) is flexible loop. ATP is bound by residues 165–167 (DAK), Asp-240, 246–247 (RK), Ala-263, and Lys-267. An L-methionine-binding site is contributed by Asp-240. An L-methionine-binding site is contributed by Lys-271.

This sequence belongs to the AdoMet synthase family. Homotetramer; dimer of dimers. The cofactor is Mg(2+). It depends on K(+) as a cofactor.

It localises to the cytoplasm. It carries out the reaction L-methionine + ATP + H2O = S-adenosyl-L-methionine + phosphate + diphosphate. Its pathway is amino-acid biosynthesis; S-adenosyl-L-methionine biosynthesis; S-adenosyl-L-methionine from L-methionine: step 1/1. Its function is as follows. Catalyzes the formation of S-adenosylmethionine (AdoMet) from methionine and ATP. The overall synthetic reaction is composed of two sequential steps, AdoMet formation and the subsequent tripolyphosphate hydrolysis which occurs prior to release of AdoMet from the enzyme. This is S-adenosylmethionine synthase from Pseudomonas fluorescens (strain Pf0-1).